A 149-amino-acid polypeptide reads, in one-letter code: Tetracenomycin polyketide synthase protein TcmJ (149 aa).

A Cupin type-2 domain is found at 51 to 117; sequence HIELAPGESV…NRGNVPARVV (67 aa). Positions 127–149 are disordered; it reads PELGHVDTEPVPNPAAAPPKVGG.

As to quaternary structure, the tetracenomycin polyketide synthase (TCM PKS) is composed of a ketosynthase complex (TcmKL), an acyl carrier protein (TcmM), a cyclase (TcmN) and a probable second cyclase (TcmJ).

The enzyme catalyses 10 malonyl-CoA + 8 H(+) = tetracenomycin F2 + 10 CO2 + 10 CoA + 2 H2O. It functions in the pathway antibiotic biosynthesis; tetracenomycin C biosynthesis. Functionally, involved in the biosynthesis of tetracenomycin C (TCM C). Part of a type II polyketide synthase (PKS) that catalyzes the synthesis of tetracenomycin F2 (TCM F2), a precursor of TCM C, from malonyl-CoA. TcmJ, while not absolutely required, greatly increases the tetracenomycin F2 production. It probably acts as a cyclase. This Streptomyces glaucescens protein is Tetracenomycin polyketide synthase protein TcmJ.